Consider the following 98-residue polypeptide: Endoribonuclease antitoxin GhoS (98 aa).

As to quaternary structure, monomer. In terms of processing, unlike other TA antitoxins, this protein is stable.

Its function is as follows. Antitoxin component of a type V toxin-antitoxin (TA) system. Neutralizes the toxic effects of toxin GhoT by digesting ghoT transcripts in a sequence-specific manner. In concert with GhoT is involved in reducing cell growth during antibacterial stress. In Escherichia coli O157:H7, this protein is Endoribonuclease antitoxin GhoS.